The primary structure comprises 240 residues: Phosphatidylserine decarboxylase proenzyme (240 aa).

The active-site Schiff-base intermediate with substrate; via pyruvic acid is Ser209. Position 209 is a pyruvic acid (Ser); by autocatalysis (Ser209).

This sequence belongs to the phosphatidylserine decarboxylase family. PSD-A subfamily. In terms of assembly, heterodimer of a large membrane-associated beta subunit and a small pyruvoyl-containing alpha subunit. The cofactor is pyruvate. Is synthesized initially as an inactive proenzyme. Formation of the active enzyme involves a self-maturation process in which the active site pyruvoyl group is generated from an internal serine residue via an autocatalytic post-translational modification. Two non-identical subunits are generated from the proenzyme in this reaction, and the pyruvate is formed at the N-terminus of the alpha chain, which is derived from the carboxyl end of the proenzyme. The post-translation cleavage follows an unusual pathway, termed non-hydrolytic serinolysis, in which the side chain hydroxyl group of the serine supplies its oxygen atom to form the C-terminus of the beta chain, while the remainder of the serine residue undergoes an oxidative deamination to produce ammonia and the pyruvoyl prosthetic group on the alpha chain.

Its subcellular location is the cell membrane. It carries out the reaction a 1,2-diacyl-sn-glycero-3-phospho-L-serine + H(+) = a 1,2-diacyl-sn-glycero-3-phosphoethanolamine + CO2. Its pathway is phospholipid metabolism; phosphatidylethanolamine biosynthesis; phosphatidylethanolamine from CDP-diacylglycerol: step 2/2. In terms of biological role, catalyzes the formation of phosphatidylethanolamine (PtdEtn) from phosphatidylserine (PtdSer). In Mycobacterium ulcerans (strain Agy99), this protein is Phosphatidylserine decarboxylase proenzyme.